Reading from the N-terminus, the 222-residue chain is tRNA (guanine-N(1)-)-methyltransferase (222 aa).

S-adenosyl-L-methionine-binding positions include Gly-110 and 130 to 135; that span reads IGDYVL.

This sequence belongs to the RNA methyltransferase TrmD family. In terms of assembly, homodimer.

The protein localises to the cytoplasm. It carries out the reaction guanosine(37) in tRNA + S-adenosyl-L-methionine = N(1)-methylguanosine(37) in tRNA + S-adenosyl-L-homocysteine + H(+). Its function is as follows. Specifically methylates guanosine-37 in various tRNAs. The sequence is that of tRNA (guanine-N(1)-)-methyltransferase from Protochlamydia amoebophila (strain UWE25).